Here is a 751-residue protein sequence, read N- to C-terminus: Photosystem I P700 chlorophyll a apoprotein A1 (751 aa).

Transmembrane regions (helical) follow at residues 73 to 96 (VFSA…FHGA), 159 to 182 (LYAT…FHYH), 198 to 222 (MNHH…HISL), 294 to 312 (EAHH…GHQY), 349 to 372 (WHAQ…HHMY), 388 to 414 (LSLF…IFMV), 436 to 458 (AIIS…LYIH), and 533 to 551 (FLVH…LILL). 2 residues coordinate [4Fe-4S] cluster: Cys575 and Cys584. 2 helical membrane passes run 591-612 (HVFL…HFSW) and 665-687 (LSAY…MFLF). His676 is a chlorophyll a' binding site. Residues Met684 and Tyr692 each contribute to the chlorophyll a site. Residue Trp693 coordinates phylloquinone. The helical transmembrane segment at 725–745 (AVGVAHYLLGGIATTWSFFLA) threads the bilayer.

This sequence belongs to the PsaA/PsaB family. The PsaA/B heterodimer binds the P700 chlorophyll special pair and subsequent electron acceptors. PSI consists of a core antenna complex that captures photons, and an electron transfer chain that converts photonic excitation into a charge separation. The eukaryotic PSI reaction center is composed of at least 11 subunits. It depends on P700 is a chlorophyll a/chlorophyll a' dimer, A0 is one or more chlorophyll a, A1 is one or both phylloquinones and FX is a shared 4Fe-4S iron-sulfur center. as a cofactor.

It is found in the plastid. Its subcellular location is the chloroplast thylakoid membrane. It carries out the reaction reduced [plastocyanin] + hnu + oxidized [2Fe-2S]-[ferredoxin] = oxidized [plastocyanin] + reduced [2Fe-2S]-[ferredoxin]. In terms of biological role, psaA and PsaB bind P700, the primary electron donor of photosystem I (PSI), as well as the electron acceptors A0, A1 and FX. PSI is a plastocyanin/cytochrome c6-ferredoxin oxidoreductase, converting photonic excitation into a charge separation, which transfers an electron from the donor P700 chlorophyll pair to the spectroscopically characterized acceptors A0, A1, FX, FA and FB in turn. Oxidized P700 is reduced on the lumenal side of the thylakoid membrane by plastocyanin or cytochrome c6. The sequence is that of Photosystem I P700 chlorophyll a apoprotein A1 from Oltmannsiellopsis viridis (Marine flagellate).